Consider the following 128-residue polypeptide: MIPVLLVTICLAVFPFQGSSIILESGNINDYEIVYPKKVAVLPTGAMNSAHPCYDPVTCQPKEKEDCESGPCCDNCKFLKEGTICKMARGDNMHDYCNGKTCDCPRNPYKGEHDPMEWPAPAKGSVLM.

A signal peptide spans 1–20; the sequence is MIPVLLVTICLAVFPFQGSS. A propeptide spanning residues 21-65 is cleaved from the precursor; that stretch reads IILESGNINDYEIVYPKKVAVLPTGAMNSAHPCYDPVTCQPKEKE. The 87-residue stretch at 26-112 folds into the Disintegrin domain; that stretch reads GNINDYEIVY…DCPRNPYKGE (87 aa). 5 disulfide bridges follow: Cys53/Cys59, Cys67/Cys76, Cys72/Cys97, Cys73/Cys102, and Cys85/Cys104. The Cell attachment site signature appears at 89 to 91; sequence RGD. Residues 116–128 constitute a propeptide that is removed on maturation; that stretch reads MEWPAPAKGSVLM.

As to quaternary structure, monomer. As to expression, expressed by the venom gland.

The protein resides in the secreted. In terms of biological role, the disintegrin ocellatusin-10c1 is a poor inhibitor of platelet aggregation. The disintegrin inhibits the adhesion of cells expressing the RGD-dependent integrin alpha-5/beta-1 (ITGA5/ITGB1) to immobilized fibronectin. Inhibition on alpha-2b/beta-3 (ITGA2B/ITGB3) is low, and there is no inhibition on alpha-1/beta-1 (ITGA1/ITGB1), alpha-2/beta-1 (ITGA2/ITGB1) and alpha-6/beta-1 (ITGA6/ITGB1). Its function is as follows. The short monomeric disintegrin ocellatusin inhibits ADP-induced platelet aggregation (IC(50)=168 nM). Inhibits alpha-5/beta-1 (ITGA5/ITGB1) integrin and induces the expression of a ligand-induced binding site epitope on beta-1 integrin subunit. Has a direct chemotactic stimulus on human neutrophils in vitro. This chain is Disintegrin ocellatusin, found in Echis ocellatus (Ocellated saw-scaled viper).